The primary structure comprises 514 residues: UDP-N-acetylmuramyl-tripeptide synthetase (514 aa).

UDP-N-acetyl-alpha-D-muramoyl-L-alanyl-D-glutamate is bound by residues L44 and S46. 129–135 (GTNGKTS) is an ATP binding site. UDP-N-acetyl-alpha-D-muramoyl-L-alanyl-D-glutamate-binding positions include 171–172 (TT), S198, and R206. K238 carries the N6-carboxylysine modification.

Belongs to the MurCDEF family. MurE subfamily. Post-translationally, carboxylation is probably crucial for Mg(2+) binding and, consequently, for the gamma-phosphate positioning of ATP.

It localises to the cytoplasm. It participates in cell wall biogenesis; peptidoglycan biosynthesis. Its function is as follows. Catalyzes the addition of an amino acid to the nucleotide precursor UDP-N-acetylmuramoyl-L-alanyl-D-glutamate (UMAG) in the biosynthesis of bacterial cell-wall peptidoglycan. In Leifsonia xyli subsp. xyli (strain CTCB07), this protein is UDP-N-acetylmuramyl-tripeptide synthetase.